The following is a 172-amino-acid chain: Small ribosomal subunit protein uS5 (172 aa).

In terms of domain architecture, S5 DRBM spans 16 to 79 (LKDRLVAINR…ESAKKNLTRV (64 aa)).

Belongs to the universal ribosomal protein uS5 family. As to quaternary structure, part of the 30S ribosomal subunit. Contacts proteins S4 and S8.

With S4 and S12 plays an important role in translational accuracy. Functionally, located at the back of the 30S subunit body where it stabilizes the conformation of the head with respect to the body. This is Small ribosomal subunit protein uS5 from Bacteroides fragilis (strain ATCC 25285 / DSM 2151 / CCUG 4856 / JCM 11019 / LMG 10263 / NCTC 9343 / Onslow / VPI 2553 / EN-2).